Consider the following 636-residue polypeptide: Signal recognition particle receptor subunit alpha (636 aa).

Disordered stretches follow at residues 132 to 205, 217 to 246, and 280 to 314; these read APTT…ELSK, IQKHGKGLDKSSKSTKSDTPKEKGKKAPRV, and IRGTGPGGQLQDLDCSSSDDEGATQNTKPSATKGT. Basic and acidic residues-rich tracts occupy residues 137–146 and 153–165; these read KKFEDSEKAK and IETRGEKTKEKAK. S177 carries the phosphoserine modification. A compositionally biased stretch (basic and acidic residues) spans 217-238; that stretch reads IQKHGKGLDKSSKSTKSDTPKE. Residue T283 is modified to Phosphothreonine. Phosphoserine is present on residues S295, S296, and S297. Residues 302–312 are compositionally biased toward polar residues; the sequence is ATQNTKPSATK. T303 carries the phosphothreonine modification. An NG domain region spans residues 417-634; sequence YVVTFCGVNG…NAKAVVAALM (218 aa). GTP contacts are provided by residues 423–430 and 518–522; these read GVNGVGKS and DTAGR. T576 carries the post-translational modification Phosphothreonine. Residue 586-589 coordinates GTP; that stretch reads TKFD.

The protein belongs to the GTP-binding SRP family. Heterodimer with SRPRB. Interacts with the signal recognition particle (SRP) complex subunit SRP54.

It localises to the endoplasmic reticulum membrane. Component of the SRP (signal recognition particle) receptor. Ensures, in conjunction with the signal recognition particle, the correct targeting of the nascent secretory proteins to the endoplasmic reticulum membrane system. Forms a guanosine 5'-triphosphate (GTP)-dependent complex with the SRP subunit SRP54. SRP receptor compaction and GTPase rearrangement drive SRP-mediated cotranslational protein translocation into the ER. This chain is Signal recognition particle receptor subunit alpha, found in Mus musculus (Mouse).